A 1056-amino-acid polypeptide reads, in one-letter code: MARNSNSDEAFSSEEEEERVKDNEEEDEEELEAVARSSGSDDDEVAAADESPVSDGEAAPVEDDYEDEEDEEKAEISKREKARLKEMQKLKKQKIQEMLESQNASIDADMNNKGKGRLKYLLQQTELFAHFAKSDGSSSQKKAKGRGRHASKITEEEEDEEYLKEEEDGLTGSGNTRLLTQPSCIQGKMRDYQLAGLNWLIRLYENGINGILADEMGLGKTLQTISLLAYLHEYRGINGPHMVVAPKSTLGNWMNEIRRFCPVLRAVKFLGNPEERRHIREDLLVAGKFDICVTSFEMAIKEKTALRRFSWRYIIIDEAHRIKNENSLLSKTMRLFSTNYRLLITGTPLQNNLHELWALLNFLLPEIFSSAETFDEWFQISGENDQQEVVQQLHKVLRPFLLRRLKSDVEKGLPPKKETILKVGMSQMQKQYYKALLQKDLEAVNAGGERKRLLNIAMQLRKCCNHPYLFQGAEPGPPYTTGDHLITNAGKMVLLDKLLPKLKERDSRVLIFSQMTRLLDILEDYLMYRGYLYCRIDGNTGGDERDASIEAYNKPGSEKFVFLLSTRAGGLGINLATADVVILYDSDWNPQVDLQAQDRAHRIGQKKEVQVFRFCTESAIEEKVIERAYKKLALDALVIQQGRLAEQKTVNKDELLQMVRYGAEMVFSSKDSTITDEDIDRIIAKGEEATAELDAKMKKFTEDAIQFKMDDSADFYDFDDDNKDENKLDFKKIVSDNWNDPPKRERKRNYSESEYFKQTLRQGAPAKPKEPRIPRMPQLHDFQFFNIQRLTELYEKEVRYLMQTHQKNQLKDTIDVEEPEEGGDPLTTEEVEEKEGLLEEGFSTWSRRDFNTFLRACEKYGRNDIKSIASEMEGKTEEEVERYAKVFKERYKELNDYDRIIKNIERGEARISRKDEIMKAIGKKLDRYRNPWLELKIQYGQNKGKLYNEECDRFMICMIHKLGYGNWDELKAAFRTSSVFRFDWFVKSRTSQELARRCDTLIRLIEKENQEFDERERQARKEKKLAKSATPSKRPLGRQASESPSSTKKRKHLSMR.

Positions 1 to 10 (MARNSNSDEA) are enriched in low complexity. Disordered stretches follow at residues 1 to 80 (MARN…SKRE) and 133 to 175 (KSDG…GSGN). Acidic residues-rich tracts occupy residues 11-32 (FSSE…EELE) and 60-73 (PVED…DEEK). Residues 12–105 (SSEEEEERVK…QEMLESQNAS (94 aa)) adopt a coiled-coil conformation. A compositionally biased stretch (basic residues) spans 141 to 151 (KKAKGRGRHAS). Residues 155–169 (EEEEDEEYLKEEEDG) are compositionally biased toward acidic residues. Residues 201-366 (IRLYENGING…WALLNFLLPE (166 aa)) form the Helicase ATP-binding domain. 214–221 (DEMGLGKT) lines the ATP pocket. Positions 317-320 (DEAH) match the DEAH box motif. A Helicase C-terminal domain is found at 494–645 (LLDKLLPKLK…ALVIQQGRLA (152 aa)). 2 disordered regions span residues 738–774 (WNDP…PRIP) and 814–833 (IDVE…EVEE). Residues 815–833 (DVEEPEEGGDPLTTEEVEE) are compositionally biased toward acidic residues. SANT domains lie at 840–892 (EGFS…ERYK) and 941–1002 (QNKG…DTLI). The interval 1011-1056 (EFDERERQARKEKKLAKSATPSKRPLGRQASESPSSTKKRKHLSMR) is disordered. The span at 1047 to 1056 (TKKRKHLSMR) shows a compositional bias: basic residues.

This sequence belongs to the SNF2/RAD54 helicase family. ISWI subfamily. In terms of assembly, interacts with RLT1 and RLT2. Interacts (via C-terminus) with RLT1 (via the DDT domain), RLT2 (via the DDT domain), PTM (via the DDT domain) and DDR4 (via the DDT domain). Binds to FGT1. As to expression, highly expressed in growing tissues such as inflorescence and flower meristems, young leaves and floral organs. Expressed in roots, rosette and cauline leaves, stems, flowers, inflorescences and siliques.

The protein resides in the nucleus. Possesses intrinsic ATP-dependent nucleosome-remodeling activity. Constitutes the catalytic subunit of several complexes capable of forming ordered nucleosome arrays on chromatin. Involved in the formation of nucleosome distribution patterns. Involved in nuclear proliferation during megagametogenesis and cell expansion in the sporophyte. Required for the maintenance of the plant vegetative phase. In association with RLT1 or RLT2 may prevent the early activation of the vegetative-to-reproductive transition by regulating key genes that contribute to flower timing, such as FT, SEP1, SEP3, AGL8/FUL, SOC1 and FLC. Necessary to acquire heat stress (HS) memory. This Arabidopsis thaliana (Mouse-ear cress) protein is ISWI chromatin-remodeling complex ATPase CHR11.